Consider the following 335-residue polypeptide: Holliday junction branch migration complex subunit RuvB (335 aa).

The large ATPase domain (RuvB-L) stretch occupies residues 4–184 (VDRIVSANAK…FGIVQRLEFY (181 aa)). ATP-binding positions include Ile-23, Arg-24, Gly-65, Lys-68, Thr-69, Thr-70, 131–133 (EDY), Arg-174, Tyr-184, and Arg-221. Residue Thr-69 coordinates Mg(2+). A small ATPAse domain (RuvB-S) region spans residues 185-255 (SVEDLASIVT…IAQEALKMLD (71 aa)). The interval 258–335 (LAGFDFMDRK…RHFGLEQIEK (78 aa)) is head domain (RuvB-H). DNA is bound by residues Arg-294, Arg-313, and Arg-318.

Belongs to the RuvB family. As to quaternary structure, homohexamer. Forms an RuvA(8)-RuvB(12)-Holliday junction (HJ) complex. HJ DNA is sandwiched between 2 RuvA tetramers; dsDNA enters through RuvA and exits via RuvB. An RuvB hexamer assembles on each DNA strand where it exits the tetramer. Each RuvB hexamer is contacted by two RuvA subunits (via domain III) on 2 adjacent RuvB subunits; this complex drives branch migration. In the full resolvosome a probable DNA-RuvA(4)-RuvB(12)-RuvC(2) complex forms which resolves the HJ.

Its subcellular location is the cytoplasm. The enzyme catalyses ATP + H2O = ADP + phosphate + H(+). The RuvA-RuvB-RuvC complex processes Holliday junction (HJ) DNA during genetic recombination and DNA repair, while the RuvA-RuvB complex plays an important role in the rescue of blocked DNA replication forks via replication fork reversal (RFR). RuvA specifically binds to HJ cruciform DNA, conferring on it an open structure. The RuvB hexamer acts as an ATP-dependent pump, pulling dsDNA into and through the RuvAB complex. RuvB forms 2 homohexamers on either side of HJ DNA bound by 1 or 2 RuvA tetramers; 4 subunits per hexamer contact DNA at a time. Coordinated motions by a converter formed by DNA-disengaged RuvB subunits stimulates ATP hydrolysis and nucleotide exchange. Immobilization of the converter enables RuvB to convert the ATP-contained energy into a lever motion, pulling 2 nucleotides of DNA out of the RuvA tetramer per ATP hydrolyzed, thus driving DNA branch migration. The RuvB motors rotate together with the DNA substrate, which together with the progressing nucleotide cycle form the mechanistic basis for DNA recombination by continuous HJ branch migration. Branch migration allows RuvC to scan DNA until it finds its consensus sequence, where it cleaves and resolves cruciform DNA. This Histophilus somni (strain 129Pt) (Haemophilus somnus) protein is Holliday junction branch migration complex subunit RuvB.